The primary structure comprises 188 residues: Small ribosomal subunit protein uS7 (188 aa).

The protein belongs to the universal ribosomal protein uS7 family. In terms of assembly, part of the 30S ribosomal subunit.

Its function is as follows. One of the primary rRNA binding proteins, it binds directly to 16S rRNA where it nucleates assembly of the head domain of the 30S subunit. Is located at the subunit interface close to the decoding center. The protein is Small ribosomal subunit protein uS7 of Methanococcus aeolicus (strain ATCC BAA-1280 / DSM 17508 / OCM 812 / Nankai-3).